A 307-amino-acid polypeptide reads, in one-letter code: Methionyl-tRNA formyltransferase (307 aa).

108-111 (SLLP) is a binding site for (6S)-5,6,7,8-tetrahydrofolate.

Belongs to the Fmt family.

It carries out the reaction L-methionyl-tRNA(fMet) + (6R)-10-formyltetrahydrofolate = N-formyl-L-methionyl-tRNA(fMet) + (6S)-5,6,7,8-tetrahydrofolate + H(+). In terms of biological role, attaches a formyl group to the free amino group of methionyl-tRNA(fMet). The formyl group appears to play a dual role in the initiator identity of N-formylmethionyl-tRNA by promoting its recognition by IF2 and preventing the misappropriation of this tRNA by the elongation apparatus. The sequence is that of Methionyl-tRNA formyltransferase from Xanthomonas axonopodis pv. citri (strain 306).